Consider the following 946-residue polypeptide: Alanine--tRNA ligase, cytoplasmic (946 aa).

The Zn(2+) site is built by His591, His595, Cys710, and His714.

The protein belongs to the class-II aminoacyl-tRNA synthetase family. As to quaternary structure, monomer. The cofactor is Zn(2+).

The protein localises to the cytoplasm. It carries out the reaction tRNA(Ala) + L-alanine + ATP = L-alanyl-tRNA(Ala) + AMP + diphosphate. Functionally, catalyzes the attachment of alanine to tRNA(Ala) in a two-step reaction: alanine is first activated by ATP to form Ala-AMP and then transferred to the acceptor end of tRNA(Ala). Also edits incorrectly charged tRNA(Ala) via its editing domain. This Dictyostelium discoideum (Social amoeba) protein is Alanine--tRNA ligase, cytoplasmic (alaS).